The following is a 514-amino-acid chain: Triacylglyceride transporter MAB_2807 (514 aa).

The next 11 membrane-spanning stretches (helical) occupy residues isoleucine 19–valine 39, glutamine 58–glycine 78, leucine 88–threonine 108, valine 118–leucine 138, leucine 157–threonine 177, alanine 178–valine 198, valine 210–tyrosine 230, leucine 239–leucine 259, proline 278–valine 298, valine 316–leucine 336, and isoleucine 344–proline 364. The beta-hairpin stretch occupies residues valine 371 to proline 380. Helical transmembrane passes span aspartate 385–leucine 405, valine 420–isoleucine 440, and methionine 485–serine 505.

This sequence belongs to the major facilitator superfamily. P55 (TC 2.A.1.3.34) family.

It is found in the cell inner membrane. In terms of biological role, in association with lipoprotein LprG probably transports triacyglycerides (TAG) across the inner cell membrane into the periplasm; TAG probably regulates lipid metabolism and growth regulation and plays a structural role in the outer membrane. TAG (and maybe other lipids) enters the central cavity of the P55 transporter from within the cell inner membrane via clefts on the cytoplasmic face of P55 between TM5-TM8 and TM2-TM11. From there the lipid is probably transferred to the hydrophobic cavity of LprG. Involved in drug susceptibilty, its expression partially complements the antibiotic susceptibilty of a double lprG-mfs deletion. Probably does not function as a bona fide drug efflux pump, but instead plays a role in outer membrane biogenesis. Probably required with LprG for normal surface localization of lipoarabinomannan (LAM). The chain is Triacylglyceride transporter MAB_2807 from Mycobacteroides abscessus (strain ATCC 19977 / DSM 44196 / CCUG 20993 / CIP 104536 / JCM 13569 / NCTC 13031 / TMC 1543 / L948) (Mycobacterium abscessus).